A 326-amino-acid polypeptide reads, in one-letter code: Transcription factor bHLH143 (326 aa).

Acidic residues predominate over residues S175–V189. 2 disordered regions span residues S175 to H194 and R234 to R275. Residues P255–D271 show a composition bias toward polar residues. The bHLH domain occupies Q263–L312.

Homodimer.

Its subcellular location is the nucleus. The protein is Transcription factor bHLH143 (BHLH143) of Arabidopsis thaliana (Mouse-ear cress).